Consider the following 220-residue polypeptide: Deoxyribose-phosphate aldolase (220 aa).

Residue aspartate 89 is the Proton donor/acceptor of the active site. Residue lysine 151 is the Schiff-base intermediate with acetaldehyde of the active site. Catalysis depends on lysine 180, which acts as the Proton donor/acceptor.

It belongs to the DeoC/FbaB aldolase family. DeoC type 1 subfamily.

Its subcellular location is the cytoplasm. The enzyme catalyses 2-deoxy-D-ribose 5-phosphate = D-glyceraldehyde 3-phosphate + acetaldehyde. Its pathway is carbohydrate degradation; 2-deoxy-D-ribose 1-phosphate degradation; D-glyceraldehyde 3-phosphate and acetaldehyde from 2-deoxy-alpha-D-ribose 1-phosphate: step 2/2. Catalyzes a reversible aldol reaction between acetaldehyde and D-glyceraldehyde 3-phosphate to generate 2-deoxy-D-ribose 5-phosphate. In Streptococcus uberis (strain ATCC BAA-854 / 0140J), this protein is Deoxyribose-phosphate aldolase.